The sequence spans 396 residues: NADH-quinone oxidoreductase subunit D (396 aa).

It belongs to the complex I 49 kDa subunit family. As to quaternary structure, NDH-1 is composed of 14 different subunits. Subunits NuoB, C, D, E, F, and G constitute the peripheral sector of the complex.

The protein resides in the cell inner membrane. It carries out the reaction a quinone + NADH + 5 H(+)(in) = a quinol + NAD(+) + 4 H(+)(out). Functionally, NDH-1 shuttles electrons from NADH, via FMN and iron-sulfur (Fe-S) centers, to quinones in the respiratory chain. The immediate electron acceptor for the enzyme in this species is believed to be ubiquinone. Couples the redox reaction to proton translocation (for every two electrons transferred, four hydrogen ions are translocated across the cytoplasmic membrane), and thus conserves the redox energy in a proton gradient. In Brucella anthropi (strain ATCC 49188 / DSM 6882 / CCUG 24695 / JCM 21032 / LMG 3331 / NBRC 15819 / NCTC 12168 / Alc 37) (Ochrobactrum anthropi), this protein is NADH-quinone oxidoreductase subunit D.